The primary structure comprises 617 residues: V-type proton ATPase catalytic subunit A (617 aa).

Residue 250–257 (GAFGCGKT) coordinates ATP. Position 384 is a phosphoserine; by AMPK (serine 384).

It belongs to the ATPase alpha/beta chains family. In terms of assembly, V-ATPase is a heteromultimeric enzyme made up of two complexes: the ATP-hydrolytic V1 complex and the proton translocation V0 complex. The V1 complex consists of three catalytic AB heterodimers that form a heterohexamer, three peripheral stalks each consisting of EG heterodimers, one central rotor including subunits D and F, and the regulatory subunits C and H. The proton translocation complex V0 consists of the proton transport subunit a, a ring of proteolipid subunits c9c'', rotary subunit d, subunits e and f, and the accessory subunits ATP6AP1/Ac45 and ATP6AP2/PRR. Interacts with the V0 complex V-ATPase subunit a4 ATP6V0A4. Interacts with WFS1. Interacts with alpha-crystallin B chain/CRYAB and with MTOR, forming a ternary complex. Post-translationally, phosphorylation at Ser-384 by AMPK down-regulates its enzyme activity.

The protein resides in the cytoplasm. The protein localises to the cytosol. Its subcellular location is the cytoplasmic vesicle. It localises to the secretory vesicle. It is found in the clathrin-coated vesicle membrane. The protein resides in the lysosome. The catalysed reaction is ATP + H2O + 4 H(+)(in) = ADP + phosphate + 5 H(+)(out). With respect to regulation, ATP hydrolysis occurs at the interface between the nucleotide-binding domains of subunits A and B. ATP hydrolysis triggers a conformational change in the subunits D and F, which induces a shift of subunit d. The c-ring is subsequently rotated and results in a continuous proton translocation across the membrane. In terms of biological role, catalytic subunit of the V1 complex of vacuolar(H+)-ATPase (V-ATPase), a multisubunit enzyme composed of a peripheral complex (V1) that hydrolyzes ATP and a membrane integral complex (V0) that translocates protons. V-ATPase is responsible for acidifying and maintaining the pH of intracellular compartments and in some cell types, is targeted to the plasma membrane, where it is responsible for acidifying the extracellular environment. In aerobic conditions, involved in intracellular iron homeostasis, thus triggering the activity of Fe(2+) prolyl hydroxylase (PHD) enzymes, and leading to HIF1A hydroxylation and subsequent proteasomal degradation. May play a role in neurite development and synaptic connectivity. This Mus musculus (Mouse) protein is V-type proton ATPase catalytic subunit A (Atp6v1a).